The chain runs to 119 residues: Ribonuclease P protein component (119 aa).

Belongs to the RnpA family. As to quaternary structure, consists of a catalytic RNA component (M1 or rnpB) and a protein subunit.

The enzyme catalyses Endonucleolytic cleavage of RNA, removing 5'-extranucleotides from tRNA precursor.. Its function is as follows. RNaseP catalyzes the removal of the 5'-leader sequence from pre-tRNA to produce the mature 5'-terminus. It can also cleave other RNA substrates such as 4.5S RNA. The protein component plays an auxiliary but essential role in vivo by binding to the 5'-leader sequence and broadening the substrate specificity of the ribozyme. The protein is Ribonuclease P protein component of Listeria monocytogenes serotype 4b (strain CLIP80459).